The following is an 80-amino-acid chain: Serine protease inhibitor Kazal-type 6 (80 aa).

The first 23 residues, 1–23 (MKTSGVFLLLSLALFCFFSGVFG), serve as a signal peptide directing secretion. A Pyrrolidone carboxylic acid modification is found at glutamine 24. Positions 24–80 (QGAQVDCAEFKDPKVYCTRESNPHCGSDGQTYGNKCAFCKAVMKSGGKINLKHRGKC) constitute a Kazal-like domain. 3 cysteine pairs are disulfide-bonded: cysteine 30/cysteine 62, cysteine 40/cysteine 59, and cysteine 48/cysteine 80.

Seminal plasma.

It is found in the secreted. Serine protease inhibitor selective for kallikreins. Efficiently inhibits KLK4, KLK5, KLK6, KLK7, KLK12, KLK13 and KLK14. Doesn't inhibit KLK8. Inhibits acrosin, trypsin, and chymotrypsin. The chain is Serine protease inhibitor Kazal-type 6 (SPINK6) from Bos taurus (Bovine).